Reading from the N-terminus, the 422-residue chain is Enolase (422 aa).

S41 lines the Mg(2+) pocket. Position 163 (E163) interacts with (2R)-2-phosphoglycerate. E204 functions as the Proton donor in the catalytic mechanism. The Mg(2+) site is built by D241, E284, and D311. K336 serves as the catalytic Proton acceptor. The (2R)-2-phosphoglycerate site is built by R365, S366, and K387.

This sequence belongs to the enolase family. As to quaternary structure, homodimer. Component of the RNA degradosome, a multiprotein complex involved in RNA processing and mRNA degradation. It depends on Mg(2+) as a cofactor.

It is found in the cytoplasm. It localises to the secreted. The protein resides in the cell surface. It carries out the reaction (2R)-2-phosphoglycerate = phosphoenolpyruvate + H2O. Its pathway is carbohydrate degradation; glycolysis; pyruvate from D-glyceraldehyde 3-phosphate: step 4/5. Functionally, catalyzes the reversible conversion of 2-phosphoglycerate (2-PG) into phosphoenolpyruvate (PEP). It is essential for the degradation of carbohydrates via glycolysis. In Legionella pneumophila subsp. pneumophila (strain Philadelphia 1 / ATCC 33152 / DSM 7513), this protein is Enolase.